A 57-amino-acid chain; its full sequence is Large ribosomal subunit protein bL32 (57 aa).

This sequence belongs to the bacterial ribosomal protein bL32 family.

In Lysinibacillus sphaericus (strain C3-41), this protein is Large ribosomal subunit protein bL32.